A 1568-amino-acid polypeptide reads, in one-letter code: Myosin-2 (1568 aa).

The Myosin N-terminal SH3-like domain occupies 4 to 57 (EVGTRCWYPHKELGWIGAEVIKNEVKDGKYHLELSLEDDEVVSVDTEDLNDDKN). A Myosin motor domain is found at 70–783 (EATEDLTSLS…MLAYLEKLRS (714 aa)). ATP is bound at residue 164 to 171 (GESGAGKT). The actin-binding stretch occupies residues 443–523 (FIGVLDIYGF…LGILSLLDEE (81 aa)). Residues 619–641 (KKAELEQNNPGNKKPGPARTVNR) form a disordered region. IQ domains follow at residues 786 to 808 (MHNS…QYLK), 809 to 833 (ISQA…YHEM), 834 to 856 (KVHS…NVFN), 857 to 881 (VLIT…KREH), 882 to 904 (EYNA…TFLN), and 905 to 934 (TKRD…DAKS). The stretch at 944-1088 (KLENKVIELT…ISRLQTAMSL (145 aa)) forms a coiled coil. The tract at residues 1089–1568 (GTVTTSVLPQ…VAQQVVQDGH (480 aa)) is non alpha-helical, tail domain. The 276-residue stretch at 1223-1498 (AQVLTTIQKV…LRYVADIVKK (276 aa)) folds into the Dilute domain.

This sequence belongs to the TRAFAC class myosin-kinesin ATPase superfamily. Myosin family. As to quaternary structure, homodimer. Interacts with calmodulin (CMD1) and the myosin light chain MLC1 through its IQ repeats.

Its function is as follows. Myosin heavy chain that is required for the cell cycle-regulated transport of various organelles and proteins for their segregation. Functions by binding with its tail domain to receptor proteins on organelles and exerting force with its N-terminal motor domain against actin filaments, thereby transporting its cargo along polarized actin cables. This chain is Myosin-2 (MYO2), found in Saccharomyces uvarum (strain ATCC 76518 / CBS 7001 / CLIB 283 / NBRC 10550 / MCYC 623 / NCYC 2669 / NRRL Y-11845) (Yeast).